The sequence spans 496 residues: MKFLICALFLAASYVAASAEAEVKVEEGVLVATVDNFKQLIADNEFVLVEFYAPWCGHCKALAPEYAKAAQQLAEKESPIKLAKVDATVEGELAEQYAVRGYPTLKFFRSGSPVEYSGGRQAADIIAWVTKKTGPPAKDLTSVADAEQFLKDNEIAIIGFFKDLESEEAKTFTKVANALDSFVFGVSSNADVIAKYEAKDNGVVLFKPFDDKKSVFEGELNEENLKKFAQVQSLPLIVDFNHESASKIFGGSIKSHLLFFVSREGGHIEKYVDPLKEIAKKYRDDILFVTISSDEEDHTRIFEFFGMNKEEVPTIRLIKLEEDMAKYKPESDDLSAETIEAFLKKFLDGKLKQHLLSQELPEDWDKNPVKVLVSSNFESVALDKSKSVLVEFYAPWCGHCKQLAPIYDQLAEKYKDNEDIVIAKMDSTANELESIKISSFPTIKYFRKEDNKVIDFNLDRTLDDFVKFLDANGEVADSEPVEETEEEEEAPKKDEL.

Residues 1-18 (MKFLICALFLAASYVAAS) form the signal peptide. 2 Thioredoxin domains span residues 19-134 (AEAE…KKTG) and 349-474 (GKLK…ANGE). Catalysis depends on nucleophile residues cysteine 56, cysteine 59, cysteine 397, and cysteine 400. Cystine bridges form between cysteine 56-cysteine 59 and cysteine 397-cysteine 400. Residues 473–496 (GEVADSEPVEETEEEEEAPKKDEL) form a disordered region. The span at 476–489 (ADSEPVEETEEEEE) shows a compositional bias: acidic residues. A Prevents secretion from ER motif is present at residues 493-496 (KDEL).

The protein belongs to the protein disulfide isomerase family. In terms of assembly, homodimer. In terms of tissue distribution, expressed in all head and body tissues.

The protein resides in the endoplasmic reticulum lumen. The catalysed reaction is Catalyzes the rearrangement of -S-S- bonds in proteins.. In terms of biological role, participates in the folding of proteins containing disulfide bonds. This Drosophila melanogaster (Fruit fly) protein is Protein disulfide-isomerase (Pdi).